Reading from the N-terminus, the 196-residue chain is Dephospho-CoA kinase (196 aa).

The DPCK domain occupies 3 to 196 (RIGLTGNIGC…KVYEELTRDP (194 aa)). An ATP-binding site is contributed by 11–16 (GCGKST).

It belongs to the CoaE family.

The protein localises to the cytoplasm. The catalysed reaction is 3'-dephospho-CoA + ATP = ADP + CoA + H(+). It functions in the pathway cofactor biosynthesis; coenzyme A biosynthesis; CoA from (R)-pantothenate: step 5/5. Catalyzes the phosphorylation of the 3'-hydroxyl group of dephosphocoenzyme A to form coenzyme A. The chain is Dephospho-CoA kinase from Aquifex aeolicus (strain VF5).